Here is a 429-residue protein sequence, read N- to C-terminus: Enolase (429 aa).

Residue glutamine 163 participates in (2R)-2-phosphoglycerate binding. The active-site Proton donor is glutamate 205. 3 residues coordinate Mg(2+): aspartate 242, glutamate 285, and aspartate 312. Residues lysine 337, arginine 366, serine 367, and lysine 388 each coordinate (2R)-2-phosphoglycerate. Catalysis depends on lysine 337, which acts as the Proton acceptor.

Belongs to the enolase family. The cofactor is Mg(2+).

Its subcellular location is the cytoplasm. The protein resides in the secreted. It is found in the cell surface. The catalysed reaction is (2R)-2-phosphoglycerate = phosphoenolpyruvate + H2O. The protein operates within carbohydrate degradation; glycolysis; pyruvate from D-glyceraldehyde 3-phosphate: step 4/5. Catalyzes the reversible conversion of 2-phosphoglycerate (2-PG) into phosphoenolpyruvate (PEP). It is essential for the degradation of carbohydrates via glycolysis. The polypeptide is Enolase (Aromatoleum aromaticum (strain DSM 19018 / LMG 30748 / EbN1) (Azoarcus sp. (strain EbN1))).